We begin with the raw amino-acid sequence, 139 residues long: Large-conductance mechanosensitive channel (139 aa).

The next 2 membrane-spanning stretches (helical) occupy residues 14 to 34 (VIDL…INSL) and 81 to 101 (GSFL…FMIV).

This sequence belongs to the MscL family. As to quaternary structure, homopentamer.

It is found in the cell membrane. In terms of biological role, channel that opens in response to stretch forces in the membrane lipid bilayer. May participate in the regulation of osmotic pressure changes within the cell. This is Large-conductance mechanosensitive channel from Chloroflexus aurantiacus (strain ATCC 29366 / DSM 635 / J-10-fl).